We begin with the raw amino-acid sequence, 530 residues long: MRRLWGAARKPSGAGWEKEWAEAPQEAPGAWSGRLGPGRSGRKGRAVPGWASWPAHLALAARPARHLGGAGQGPRPLHSGTAPFHSRASGERQRRLEPQLQHESRCRSSTPADAWRAEAALPVRAMGAPWGSPTAAAGGRRGWRRGRGLPWTVCVLAAAGLTCTALITYACWGQLPPLPWASPTPSRPVGVLLWWEPFGGRDSAPRPPPDCRLRFNISGCRLLTDRASYGEAQAVLFHHRDLVKGPPDWPPPWGIQAHTAEEVDLRVLDYEEAAAAAEALATSSPRPPGQRWVWMNFESPSHSPGLRSLASNLFNWTLSYRADSDVFVPYGYLYPRSHPGDPPSGLAPPLSRKQGLVAWVVSHWDERQARVRYYHQLSQHVTVDVFGRGGPGQPVPEIGLLHTVARYKFYLAFENSQHLDYITEKLWRNALLAGAVPVVLGPDRANYERFVPRGAFIHVDDFPSASSLASYLLFLDRNPAVYRRYFHWRRSYAVHITSFWDEPWCRVCQAVQRAGDRPKSIRNLASWFER.

Disordered stretches follow at residues 1–48 and 66–112; these read MRRL…RAVP and HLGG…STPA. The Cytoplasmic segment spans residues 1-147; sequence MRRLWGAARK…GGRRGWRRGR (147 aa). Residues 88–106 are compositionally biased toward basic and acidic residues; sequence ASGERQRRLEPQLQHESRC. A helical; Signal-anchor for type II membrane protein transmembrane segment spans residues 148-172; it reads GLPWTVCVLAAAGLTCTALITYACW. Residues 173 to 530 are Lumenal-facing; the sequence is GQLPPLPWAS…IRNLASWFER (358 aa). N-linked (GlcNAc...) asparagine glycosylation is found at Asn216 and Asn315.

It belongs to the glycosyltransferase 10 family. In terms of tissue distribution, expressed at low levels in bone marrow-derived mesenchymal stem cells. As to expression, expressed in cord blood immature promyelocytes and in peripheral blood myeloid and lymphoid cell populations.

Its subcellular location is the golgi apparatus. The protein resides in the golgi stack membrane. It catalyses the reaction a beta-D-galactosyl-(1-&gt;4)-N-acetyl-beta-D-glucosaminyl derivative + GDP-beta-L-fucose = a beta-D-galactosyl-(1-&gt;4)-[alpha-L-fucosyl-(1-&gt;3)]-N-acetyl-beta-D-glucosaminyl derivative + GDP + H(+). The enzyme catalyses an N-acetyl-alpha-neuraminyl-(2-&gt;3)-beta-D-galactosyl-(1-&gt;4)-N-acetyl-beta-D-glucosaminyl derivative + GDP-beta-L-fucose = an alpha-Neu5Ac-(2-&gt;3)-beta-D-Gal-(1-&gt;4)-[alpha-L-Fuc-(1-&gt;3)]-beta-D-GlcNAc derivative + GDP + H(+). The catalysed reaction is an alpha-Neu5Ac-(2-&gt;3)-beta-D-Gal-(1-&gt;4)-beta-D-GlcNAc-(1-&gt;3)-beta-D-Gal-(1-&gt;4)-beta-D-GlcNAc derivative + GDP-beta-L-fucose = an alpha-Neu5Ac-(2-&gt;3)-beta-D-Gal-(1-&gt;4)-beta-D-GlcNAc-(1-&gt;3)-beta-D-Gal-(1-&gt;4)-[alpha-L-Fuc-(1-&gt;3)]-beta-D-GlcNAc derivative + GDP + H(+). It carries out the reaction an alpha-Neu5Ac-(2-&gt;3)-beta-D-Gal-(1-&gt;4)-beta-D-GlcNAc6S derivative + GDP-beta-L-fucose = an alpha-Neu5Ac-(2-&gt;3)-beta-D-Gal-(1-&gt;4)-[alpha-L-Fuc-(1-&gt;3)]-beta-D-GlcNAc6S derivative + GDP + H(+). The protein operates within protein modification; protein glycosylation. In terms of biological role, catalyzes alpha(1-&gt;3) linkage of fucosyl moiety transferred from GDP-beta-L-fucose to N-acetyl glucosamine (GlcNAc) within type 2 lactosamine (LacNAc, Gal-beta(1-&gt;4)GlcNAc) glycan attached to N- or O-linked glycoproteins. Robustly fucosylates nonsialylated distal LacNAc unit of the polylactosamine chain to form Lewis X antigen (CD15), a glycan determinant known to mediate important cellular functions in development and immunity. Fucosylates with lower efficiency sialylated LacNAc acceptors to form sialyl Lewis X and 6-sulfo sialyl Lewis X determinants that serve as recognition epitopes for C-type lectins. Together with FUT7 contributes to SELE, SELL and SELP selectin ligand biosynthesis and selectin-dependent lymphocyte homing, leukocyte migration and blood leukocyte homeostasis. In a cell type specific manner, may also fucosylate the internal LacNAc unit of the polylactosamine chain to form VIM-2 antigen that serves as recognition epitope for SELE. Does not generate Lewis X antigens. The chain is Alpha-(1,3)-fucosyltransferase 4 from Homo sapiens (Human).